Reading from the N-terminus, the 640-residue chain is SH3 domain-containing protein 21 (640 aa).

Residues 1–60 (MVQSELQLQPRAGGRAEAASWGDRGNDKGGLGNPDMPSVSPGPQRPPKLSSLAYDSPPDY) are disordered. One can recognise an SH3 domain in the interval 65 to 126 (SHPEVYRVLF…PDNFVLPPPP (62 aa)). 3 disordered regions span residues 133–361 (RKVV…PLGD), 401–551 (YFVA…PDSQ), and 618–640 (VQVM…TQTY). Basic and acidic residues predominate over residues 177 to 186 (PSRDSQKLTS). The segment covering 210–220 (TQTPQQRSVSS) has biased composition (polar residues). Basic and acidic residues-rich tracts occupy residues 401 to 416 (YFVA…EAHT), 459 to 469 (ALEKPHPHEEA), and 494 to 532 (RPLR…EVPP). A coiled-coil region spans residues 572 to 626 (VDVTSLRGEVESLRRALELMEVQLERKLTDIWEELKSEKEQRRRLEVQVMQGTQK). A compositionally biased stretch (polar residues) spans 621-640 (MQGTQKSQTPRVIHTQTQTY).

The sequence is that of SH3 domain-containing protein 21 (SH3D21) from Homo sapiens (Human).